A 296-amino-acid polypeptide reads, in one-letter code: Ribose import binding protein RbsB (296 aa).

The first 25 residues, 1-25 (MNMKKLATLVSAVALSATVSANAMA), serve as a signal peptide directing secretion.

The protein belongs to the bacterial solute-binding protein 2 family. In terms of assembly, the complex is composed of an ATP-binding protein (RbsA), two transmembrane proteins (RbsC) and a solute-binding protein (RbsB).

Its subcellular location is the periplasm. Part of the ABC transporter complex RbsABC involved in ribose import. Binds ribose. Also serves as the primary chemoreceptor for chemotaxis. This chain is Ribose import binding protein RbsB, found in Escherichia coli (strain K12).